A 150-amino-acid polypeptide reads, in one-letter code: Cell division protein SepF (150 aa).

The protein belongs to the SepF family. Homodimer. Interacts with FtsZ.

Its subcellular location is the cytoplasm. Functionally, cell division protein that is part of the divisome complex and is recruited early to the Z-ring. Probably stimulates Z-ring formation, perhaps through the cross-linking of FtsZ protofilaments. Its function overlaps with FtsA. This is Cell division protein SepF from Clostridium kluyveri (strain NBRC 12016).